We begin with the raw amino-acid sequence, 376 residues long: MARVEL domain-containing protein 3 (376 aa).

Over residues 1-95 the composition is skewed to basic and acidic residues; the sequence is MKNTSGHREP…EKSRQSRARP (95 aa). The interval 1–134 is disordered; that stretch reads MKNTSGHREP…GRRGLESERA (134 aa). Residues 1–173 lie on the Cytoplasmic side of the membrane; that stretch reads MKNTSGHREP…HKCRYLCTGR (173 aa). An MARVEL domain is found at 168-361; the sequence is YLCTGRACWQ…GAVLAFRGYR (194 aa). Residues 174–194 form a helical membrane-spanning segment; the sequence is ACWQMLKALLNLLILACSSVS. Topologically, residues 195–247 are extracellular; that stretch reads YNSTGGYTGITSLGGIYYYQYGGAYSGFDGADGERAQQLDVQFYQLKLPTVTA. Residues 248–268 form a helical membrane-spanning segment; the sequence is AMAYSGALMTFSCLTLLAGAL. The Cytoplasmic portion of the chain corresponds to 269–275; the sequence is RVPWHCP. Residues 276–296 form a helical membrane-spanning segment; the sequence is LWLVIEGLMDALIAGAYVPGL. Over 297 to 335 the chain is Extracellular; it reads YFFFQHLSAAYSSDVCKERETLYQSKGYSGFNCGVHGGD. The helical transmembrane segment at 336–356 threads the bilayer; sequence IGAGVFAAMAIGVFAVGAVLA. Residues 357 to 376 lie on the Cytoplasmic side of the membrane; sequence FRGYRKVKKLKEKPTEMLEF.

In terms of tissue distribution, widely expressed with highest levels in small intestine, colon, stomach and lung. Liver expresses only isoform 2.

Its subcellular location is the membrane. The protein localises to the cell junction. The protein resides in the tight junction. Its function is as follows. As a component of tight junctions, plays a role in paracellular ion conductivity. The sequence is that of MARVEL domain-containing protein 3 (Marveld3) from Mus musculus (Mouse).